Here is a 163-residue protein sequence, read N- to C-terminus: Nucleotide-binding protein CGSHiGG_08790 (163 aa).

It belongs to the YajQ family.

In terms of biological role, nucleotide-binding protein. This chain is Nucleotide-binding protein CGSHiGG_08790, found in Haemophilus influenzae (strain PittGG).